The following is a 37-amino-acid chain: Bacteriocin lactococcin MMFII (37 aa).

Cysteines 9 and 14 form a disulfide.

Its subcellular location is the secreted. Bacteriocin active against Listeria monocytogenes and Lactococcus cremoris. The chain is Bacteriocin lactococcin MMFII from Lactococcus lactis subsp. lactis (Streptococcus lactis).